We begin with the raw amino-acid sequence, 938 residues long: Isoleucine--tRNA ligase (938 aa).

Residues 58–68 (PYANGNIHMGH) carry the 'HIGH' region motif. Glu-566 contributes to the L-isoleucyl-5'-AMP binding site. Positions 607-611 (KMSKS) match the 'KMSKS' region motif. Lys-610 is a binding site for ATP. Zn(2+) contacts are provided by Cys-906, Cys-909, Cys-926, and Cys-929.

This sequence belongs to the class-I aminoacyl-tRNA synthetase family. IleS type 1 subfamily. Monomer. Requires Zn(2+) as cofactor.

It localises to the cytoplasm. The enzyme catalyses tRNA(Ile) + L-isoleucine + ATP = L-isoleucyl-tRNA(Ile) + AMP + diphosphate. Functionally, catalyzes the attachment of isoleucine to tRNA(Ile). As IleRS can inadvertently accommodate and process structurally similar amino acids such as valine, to avoid such errors it has two additional distinct tRNA(Ile)-dependent editing activities. One activity is designated as 'pretransfer' editing and involves the hydrolysis of activated Val-AMP. The other activity is designated 'posttransfer' editing and involves deacylation of mischarged Val-tRNA(Ile). The polypeptide is Isoleucine--tRNA ligase (Nitratidesulfovibrio vulgaris (strain DP4) (Desulfovibrio vulgaris)).